Here is a 758-residue protein sequence, read N- to C-terminus: UPF0313 protein CV_1738 (758 aa).

The 266-residue stretch at 377-642 (AWEMIKYSVN…VDVVRDGYRR (266 aa)) folds into the Radical SAM core domain. [4Fe-4S] cluster is bound by residues Cys-391, Cys-395, and Cys-398. The segment at 698-758 (GAPMNRGKSP…KPGGKTSRSR (61 aa)) is disordered. Residues 727–737 (RGQGGQGGRPG) show a composition bias toward gly residues.

Belongs to the UPF0313 family. The cofactor is [4Fe-4S] cluster.

In Chromobacterium violaceum (strain ATCC 12472 / DSM 30191 / JCM 1249 / CCUG 213 / NBRC 12614 / NCIMB 9131 / NCTC 9757 / MK), this protein is UPF0313 protein CV_1738.